We begin with the raw amino-acid sequence, 398 residues long: tRNA-specific 2-thiouridylase MnmA (398 aa).

ATP is bound by residues 20–27 (AMSGGVDS) and L46. The active-site Nucleophile is the C114. A disulfide bridge connects residues C114 and C210. ATP is bound at residue G138. The segment at 160 to 162 (RDQ) is interaction with tRNA. The active-site Cysteine persulfide intermediate is the C210.

It belongs to the MnmA/TRMU family.

It localises to the cytoplasm. The enzyme catalyses S-sulfanyl-L-cysteinyl-[protein] + uridine(34) in tRNA + AH2 + ATP = 2-thiouridine(34) in tRNA + L-cysteinyl-[protein] + A + AMP + diphosphate + H(+). In terms of biological role, catalyzes the 2-thiolation of uridine at the wobble position (U34) of tRNA, leading to the formation of s(2)U34. This Brucella suis (strain ATCC 23445 / NCTC 10510) protein is tRNA-specific 2-thiouridylase MnmA.